A 282-amino-acid polypeptide reads, in one-letter code: Aminoglycoside 6-adenylyltransferase (282 aa).

The enzyme catalyses streptomycin + ATP = 6-O-adenylylstreptomycin + diphosphate. In terms of biological role, required for streptomycin resistance. Adenylates streptomycin on the O-6 residue. The sequence is that of Aminoglycoside 6-adenylyltransferase from Staphylococcus aureus.